The chain runs to 365 residues: Aminomethyltransferase (365 aa).

This sequence belongs to the GcvT family. The glycine cleavage system is composed of four proteins: P, T, L and H.

The enzyme catalyses N(6)-[(R)-S(8)-aminomethyldihydrolipoyl]-L-lysyl-[protein] + (6S)-5,6,7,8-tetrahydrofolate = N(6)-[(R)-dihydrolipoyl]-L-lysyl-[protein] + (6R)-5,10-methylene-5,6,7,8-tetrahydrofolate + NH4(+). Functionally, the glycine cleavage system catalyzes the degradation of glycine. This is Aminomethyltransferase from Erwinia tasmaniensis (strain DSM 17950 / CFBP 7177 / CIP 109463 / NCPPB 4357 / Et1/99).